The sequence spans 799 residues: Conserved oligomeric Golgi complex subunit 6 (799 aa).

This sequence belongs to the COG6 family.

The protein resides in the golgi apparatus membrane. Functionally, acts as a component of the peripheral membrane COG complex that is involved in intra-Golgi protein trafficking. COG is located at the cis-Golgi, and regulates tethering of retrograde intra-Golgi vesicles and possibly a number of other membrane trafficking events. The sequence is that of Conserved oligomeric Golgi complex subunit 6 (COG6) from Scheffersomyces stipitis (strain ATCC 58785 / CBS 6054 / NBRC 10063 / NRRL Y-11545) (Yeast).